The primary structure comprises 458 residues: Elongation factor 1-alpha (458 aa).

Glycine 2 bears the N,N,N-trimethylglycine mark. An N6,N6-dimethyllysine; alternate modification is found at lysine 3. Residue lysine 3 is modified to N6-methyllysine; alternate. Residues 5-240 enclose the tr-type G domain; the sequence is KTHVNVVVIG…DAIDPPQRPS (236 aa). The tract at residues 14 to 21 is G1; it reads GHVDSGKS. Residue 14–21 coordinates GTP; it reads GHVDSGKS. Lysine 30 carries the N6-methyllysine modification. The G2 stretch occupies residues 70 to 74; that stretch reads GITID. Residue lysine 79 is modified to N6,N6,N6-trimethyllysine. A G3 region spans residues 91–94; it reads DAPG. Residues 91-95 and 153-156 each bind GTP; these read DAPGH and NKMD. Positions 153-156 are G4; it reads NKMD. Residues 192 to 194 form a G5 region; it reads SGW. Lysine 316 carries the N6,N6-dimethyllysine; alternate modification. Lysine 316 carries the post-translational modification N6-methyllysine; alternate. Position 390 is an N6-methyllysine (lysine 390).

This sequence belongs to the TRAFAC class translation factor GTPase superfamily. Classic translation factor GTPase family. EF-Tu/EF-1A subfamily.

The protein resides in the cytoplasm. In terms of biological role, this protein promotes the GTP-dependent binding of aminoacyl-tRNA to the A-site of ribosomes during protein biosynthesis. This Absidia glauca (Pin mould) protein is Elongation factor 1-alpha (TEF-1).